The sequence spans 64 residues: Sperm protamine P1 (64 aa).

Residues methionine 1–tyrosine 64 form a disordered region.

Belongs to the protamine P1 family. Testis.

It localises to the nucleus. Its subcellular location is the chromosome. In terms of biological role, protamines substitute for histones in the chromatin of sperm during the haploid phase of spermatogenesis. They compact sperm DNA into a highly condensed, stable and inactive complex. The chain is Sperm protamine P1 (PRM1) from Hypsiprymnodon moschatus (Musky rat kangaroo).